Here is a 431-residue protein sequence, read N- to C-terminus: Protein S-Myc (431 aa).

A Phosphotyrosine; by Tyr-kinases modification is found at Tyr36. The bHLH domain maps to 348–400 (ERRRNHNRMERQRRDIMRSSFLNLRDLVPELVHNEKAAKVVILKKATEYIHTL). Positions 400–421 (LQADESKLLVERKKLYERQQQL) are leucine-zipper.

As to quaternary structure, efficient DNA binding requires dimerization with another bHLH protein.

It localises to the nucleus. Functionally, has apoptosis-inducing activity. The chain is Protein S-Myc (Mycs) from Mus musculus (Mouse).